Consider the following 276-residue polypeptide: Ribosomal RNA small subunit methyltransferase A (276 aa).

S-adenosyl-L-methionine is bound by residues Asn28, Leu30, Gly55, Glu77, Asp103, and Asn124.

This sequence belongs to the class I-like SAM-binding methyltransferase superfamily. rRNA adenine N(6)-methyltransferase family. RsmA subfamily.

Its subcellular location is the cytoplasm. It catalyses the reaction adenosine(1518)/adenosine(1519) in 16S rRNA + 4 S-adenosyl-L-methionine = N(6)-dimethyladenosine(1518)/N(6)-dimethyladenosine(1519) in 16S rRNA + 4 S-adenosyl-L-homocysteine + 4 H(+). Specifically dimethylates two adjacent adenosines (A1518 and A1519) in the loop of a conserved hairpin near the 3'-end of 16S rRNA in the 30S particle. May play a critical role in biogenesis of 30S subunits. This is Ribosomal RNA small subunit methyltransferase A from Agrobacterium fabrum (strain C58 / ATCC 33970) (Agrobacterium tumefaciens (strain C58)).